Here is a 583-residue protein sequence, read N- to C-terminus: Isocitrate dehydrogenase kinase/phosphatase (583 aa).

Residues 315-321 (APGIRGM) and lysine 336 contribute to the ATP site. Residue aspartate 371 is part of the active site.

This sequence belongs to the AceK family.

The protein localises to the cytoplasm. It catalyses the reaction L-seryl-[isocitrate dehydrogenase] + ATP = O-phospho-L-seryl-[isocitrate dehydrogenase] + ADP + H(+). Its function is as follows. Bifunctional enzyme which can phosphorylate or dephosphorylate isocitrate dehydrogenase (IDH) on a specific serine residue. This is a regulatory mechanism which enables bacteria to bypass the Krebs cycle via the glyoxylate shunt in response to the source of carbon. When bacteria are grown on glucose, IDH is fully active and unphosphorylated, but when grown on acetate or ethanol, the activity of IDH declines drastically concomitant with its phosphorylation. In Salmonella enteritidis PT4 (strain P125109), this protein is Isocitrate dehydrogenase kinase/phosphatase.